Consider the following 938-residue polypeptide: Histone deacetylase 7 (938 aa).

The segment at 1 to 40 is disordered; it reads MHSPGAGCPALQPDTPGSQPQPMDLRVGQRPTVEPPPEPA. The interaction with MEF2C stretch occupies residues 1 to 121; that stretch reads MHSPGAGCPA…LAEVILKKQQ (121 aa). Transcription repression stretches follow at residues 2–254 and 241–533; these read HSPG…DGDR and GPNP…EHAG. The segment at 72-172 is interaction with MEF2A; the sequence is SMDPPMPELQ…LPTEPPEHFP (101 aa). Ser-132 is modified (phosphoserine). Disordered stretches follow at residues 155–280, 331–361, 373–463, and 472–491; these read SFLP…HHGL, SGSG…APLQ, LIKP…DSVL, and RPLS…LSPE. Ser-178 is modified (phosphoserine; by MARK2, MARK3 and PKD/PRKD1). A compositionally biased stretch (basic and acidic residues) spans 190-204; that stretch reads KSLERRKNPLLRKES. A Phosphoserine; by PKD/PRKD2 modification is found at Ser-204. Positions 220-235 are enriched in low complexity; sequence SSPSSSSTPASGCSSP. Ser-344 carries the phosphoserine; by PKD/PRKD1 modification. Residues Ser-350 and Ser-398 each carry the phosphoserine modification. Over residues 350 to 361 the composition is skewed to low complexity; that stretch reads SATASPLLAPLQ. Composition is skewed to low complexity over residues 429 to 448 and 479 to 491; these read GRGS…EQQH and SSPA…LSPE. Ser-479 is modified (phosphoserine; by PKD/PRKD1). Ser-480 is modified (phosphoserine). Residues 505–852 form a histone deacetylase region; that stretch reads PATGLVYDSV…VAALLGNKVD (348 aa). Positions 520, 522, and 528 each coordinate Zn(2+). At Ser-582 the chain carries Phosphoserine. Cys-605 contacts Zn(2+). His-657 is an active-site residue. The tract at residues 864–938 is interaction with SIN3A; that stretch reads NLSAIRSLEA…LVEEEEPMNL (75 aa). The short motif at 904 to 938 is the Nuclear export signal element; sequence AEVEAVTALASLSVGILAEDRPSERLVEEEEPMNL.

The protein belongs to the histone deacetylase family. HD type 2 subfamily. As to quaternary structure, interacts with HDAC1, HDAC2, HDAC3, HDAC4, HDAC5, NCOR1, NCOR2, SIN3A, SIN3B, RBBP4, RBBP7, MTA1L1, SAP30 and MBD3. Interacts with KAT5 and EDNRA. Interacts with the 14-3-3 protein YWHAE, MEF2A, MEF2B and MEF2C. Interacts with ZMYND15. Interacts with KDM5B. Interacts with PML. Interacts with FOXP3. Interacts with RARA. Post-translationally, may be phosphorylated by CaMK1. Phosphorylated by the PKC kinases PKN1 and PKN2, impairing nuclear import. Phosphorylation at Ser-178 by MARK2, MARK3 and PRKD1 promotes interaction with 14-3-3 proteins and export from the nucleus. Phosphorylation at Ser-178 is a prerequisite for phosphorylation at Ser-204. Highly expressed in heart and lung. Expressed at intermediate level in muscle.

The protein localises to the nucleus. It localises to the cytoplasm. The catalysed reaction is N(6)-acetyl-L-lysyl-[histone] + H2O = L-lysyl-[histone] + acetate. It catalyses the reaction N(6)-acetyl-L-lysyl-[protein] + H2O = L-lysyl-[protein] + acetate. Its activity is inhibited by Trichostatin A (TSA), a known histone deacetylase inhibitor. Its function is as follows. Responsible for the deacetylation of lysine residues on the N-terminal part of the core histones (H2A, H2B, H3 and H4). Histone deacetylation gives a tag for epigenetic repression and plays an important role in transcriptional regulation, cell cycle progression and developmental events. Histone deacetylases act via the formation of large multiprotein complexes. Involved in muscle maturation by repressing transcription of myocyte enhancer factors such as MEF2A, MEF2B and MEF2C. During muscle differentiation, it shuttles into the cytoplasm, allowing the expression of myocyte enhancer factors. Positively regulates the transcriptional repressor activity of FOXP3. Serves as a corepressor of RARA, causing its deacetylation and inhibition of RARE DNA element binding. In association with RARA, plays a role in the repression of microRNA-10a and thereby in the inflammatory response. Also acetylates non-histone proteins, such as ALKBH5. This is Histone deacetylase 7 (Hdac7) from Mus musculus (Mouse).